The sequence spans 25 residues: Flagellar filament core protein flaB1 (25 aa).

The protein belongs to the bacterial flagellin family. The flagellum consists of an outer layer composed of two sheath proteins, flaA1 (44 kDa) and flaA2 (35 kDa) around a core that contains three proteins flaB1 (37 kDa), flaB2 (34 kDa) and flaB3 (32 kDa).

The protein localises to the periplasmic flagellum. The protein resides in the periplasm. Its function is as follows. Component of the core of the flagella. This Brachyspira hyodysenteriae (Treponema hyodysenteriae) protein is Flagellar filament core protein flaB1 (flaB1).